The following is a 232-amino-acid chain: Ion-translocating oxidoreductase complex subunit E (232 aa).

The next 6 membrane-spanning stretches (helical) occupy residues glycine 18 to alanine 38, isoleucine 39 to valine 59, isoleucine 69 to alanine 89, glycine 93 to glycine 113, alanine 127 to alanine 147, and asparagine 182 to isoleucine 202.

This sequence belongs to the NqrDE/RnfAE family. In terms of assembly, the complex is composed of six subunits: RnfA, RnfB, RnfC, RnfD, RnfE and RnfG.

The protein resides in the cell inner membrane. In terms of biological role, part of a membrane-bound complex that couples electron transfer with translocation of ions across the membrane. The chain is Ion-translocating oxidoreductase complex subunit E from Shewanella loihica (strain ATCC BAA-1088 / PV-4).